Consider the following 340-residue polypeptide: Flavonoid 7-O-methyltransferase 1 (340 aa).

An S-adenosyl-L-methionine-binding site is contributed by Asp207. Catalysis depends on His245, which acts as the Proton acceptor.

It belongs to the class I-like SAM-binding methyltransferase superfamily. Cation-independent O-methyltransferase family. In terms of assembly, homodimer. As to expression, expressed in leaves.

It catalyses the reaction (2S)-naringenin + S-adenosyl-L-methionine = (2S)-sakuranetin + S-adenosyl-L-homocysteine + H(+). It carries out the reaction scutellarein + S-adenosyl-L-methionine = scutellarein 7-methyl ether + S-adenosyl-L-homocysteine. The catalysed reaction is apigenin + S-adenosyl-L-methionine = genkwanin + S-adenosyl-L-homocysteine + H(+). The enzyme catalyses luteolin + S-adenosyl-L-methionine = luteolin 7-methyl ether + S-adenosyl-L-homocysteine + H(+). It catalyses the reaction chrysoeriol + S-adenosyl-L-methionine = velutin + S-adenosyl-L-homocysteine. It carries out the reaction diosmetin + S-adenosyl-L-methionine = luteolin 4',7-dimethyl ether + S-adenosyl-L-homocysteine. The catalysed reaction is acacetin + S-adenosyl-L-methionine = apigenin 4',7-dimethyl ether + S-adenosyl-L-homocysteine. The enzyme catalyses scutellarein 4'-methyl ether + S-adenosyl-L-methionine = ladanein + S-adenosyl-L-homocysteine. The protein operates within flavonoid metabolism. Flavonoid 7-O-methyltransferase involved in the biosynthesis of polymethoxylated flavonoids natural products such as nevadensin and salvigenin, aroma compounds which contribute to the flavor of sweet basil, and exhibit pharmacological activities such as anti-allergic, anti-oxidant, antibacterial, anti-proliferative, and anti-inflammatory effects. Catalyzes S-adenosylmethionine-dependent regioselective 7-O-methylation of flavonoids; active on various hydroxylated flavonoid substrates, including apigenin (API) and luteolin (LUT), and, with a lower efficiency, scutellarein (SCU), naringenin (NAR), chrysoeriol (CHRYS), diosmetin (DIOS), acacetin (ACA) and scutellarein-7-methyl ether (SCU7Me). The chain is Flavonoid 7-O-methyltransferase 1 from Ocimum basilicum (Sweet basil).